Consider the following 395-residue polypeptide: uncharacterized protein (395 aa).

Helical transmembrane passes span 42-62, 67-87, 97-117, 128-148, 196-216, 241-261, and 281-301; these read LKYV…LIFI, LYSF…FVLL, LIFN…LIIF, ILST…SIIP, FIYA…LYIL, ILFY…SFVA, and LFFS…GTVV.

It localises to the cell membrane. This is an uncharacterized protein from Mycoplasma genitalium (strain ATCC 33530 / DSM 19775 / NCTC 10195 / G37) (Mycoplasmoides genitalium).